Reading from the N-terminus, the 697-residue chain is uncharacterized protein (697 aa).

The zn(2)-C6 fungal-type DNA-binding region spans 24–51; sequence CIRCRQKKIKCSGEKPSCQACSNNKVEC. The chain crosses the membrane as a helical span at residues 500 to 520; the sequence is YIMSPFVGFSILTAATIHMLL.

The protein resides in the nucleus membrane. This is an uncharacterized protein from Schizosaccharomyces pombe (strain 972 / ATCC 24843) (Fission yeast).